We begin with the raw amino-acid sequence, 287 residues long: uncharacterized protein (287 aa).

Residues T43 and Y104 each act as charge relay system in the active site. Residue Y130 is the Proton donor of the active site. Residue K158 is the Schiff-base intermediate with substrate of the active site.

It belongs to the DapA family. As to quaternary structure, homotetramer.

The protein resides in the cytoplasm. This is an uncharacterized protein from Pyrococcus horikoshii (strain ATCC 700860 / DSM 12428 / JCM 9974 / NBRC 100139 / OT-3).